Consider the following 220-residue polypeptide: Deoxyribose-phosphate aldolase (220 aa).

The Proton donor/acceptor role is filled by Asp89. The active-site Schiff-base intermediate with acetaldehyde is Lys151. Lys180 serves as the catalytic Proton donor/acceptor.

Belongs to the DeoC/FbaB aldolase family. DeoC type 1 subfamily.

Its subcellular location is the cytoplasm. It carries out the reaction 2-deoxy-D-ribose 5-phosphate = D-glyceraldehyde 3-phosphate + acetaldehyde. It functions in the pathway carbohydrate degradation; 2-deoxy-D-ribose 1-phosphate degradation; D-glyceraldehyde 3-phosphate and acetaldehyde from 2-deoxy-alpha-D-ribose 1-phosphate: step 2/2. Catalyzes a reversible aldol reaction between acetaldehyde and D-glyceraldehyde 3-phosphate to generate 2-deoxy-D-ribose 5-phosphate. The polypeptide is Deoxyribose-phosphate aldolase (Bdellovibrio bacteriovorus (strain ATCC 15356 / DSM 50701 / NCIMB 9529 / HD100)).